Consider the following 278-residue polypeptide: ATPase SWSAP1 (278 aa).

A disordered region spans residues 237–278 (SPEKKDSSAGSQSLTLGCDNLPGPGSPLDGILTSETGADSKT). Polar residues predominate over residues 269-278 (TSETGADSKT).

In terms of assembly, interacts with ZSWIM7; they form a functional complex involved in homologous recombination repair and stabilize each other. Interacts with RAD51, RAD51B, RAD51C, RAD51D and XRCC3; involved in homologous recombination repair.

Its subcellular location is the nucleus. In terms of biological role, ATPase which is preferentially stimulated by single-stranded DNA and is involved in homologous recombination repair (HRR). Has a DNA-binding activity which is independent of its ATPase activity. The sequence is that of ATPase SWSAP1 (Swsap1) from Mus musculus (Mouse).